We begin with the raw amino-acid sequence, 709 residues long: Polyribonucleotide nucleotidyltransferase (709 aa).

The Mg(2+) site is built by aspartate 489 and aspartate 495. The KH domain maps to 556-615 (PKIDMIKIDVDKIKVVIGKGGETIDKIIAETGVKIDIDEEGNVSIFSSDQAAIDRTKDII). The S1 motif domain maps to 625–693 (GEVYHAKVVR…DKGRVDASMK (69 aa)).

It belongs to the polyribonucleotide nucleotidyltransferase family. Requires Mg(2+) as cofactor.

The protein resides in the cytoplasm. The catalysed reaction is RNA(n+1) + phosphate = RNA(n) + a ribonucleoside 5'-diphosphate. Functionally, involved in mRNA degradation. Catalyzes the phosphorolysis of single-stranded polyribonucleotides processively in the 3'- to 5'-direction. The protein is Polyribonucleotide nucleotidyltransferase of Streptococcus agalactiae serotype Ia (strain ATCC 27591 / A909 / CDC SS700).